The primary structure comprises 68 residues: Alpha-conotoxin PIVA (68 aa).

Positions 1-16 (MFTVFLLVVLATTVVS) are cleaved as a signal peptide. A propeptide spanning residues 17-41 (FTSDRASDDRNTNDKASRLLSHVVR) is cleaved from the precursor. Intrachain disulfides connect Cys43-Cys57, Cys44-Cys52, and Cys55-Cys64. A 4-hydroxyproline; partial mark is found at Pro48 and Pro54. 4-hydroxyproline is present on Pro61. Gln66 is modified (glutamine amide).

This sequence belongs to the conotoxin A superfamily. As to expression, expressed by the venom duct.

The protein resides in the secreted. Its function is as follows. Alpha-conotoxins act on postsynaptic membranes, they bind to the nicotinic acetylcholine receptors (nAChR) and thus inhibit them. This toxin has higher affinity for the adult subtype (alpha-1-beta-1-gamma-delta (CHRNA1-CHRNB1-CHRNG-CHRND) subunits) (IC(50)=2.3 nM) of the receptor than for the fetal subtype (alpha-1-beta-1-epsilon-delta (CHRNA1-CHRNB1-CHRND-CHRNE) subunits) (IC(50)=22 nM). The protein is Alpha-conotoxin PIVA of Conus purpurascens (Purple cone).